The following is a 347-amino-acid chain: DNA polymerase III subunit delta (347 aa).

It belongs to the DNA polymerase HolA subunit family. As to quaternary structure, component of the DNA clamp loading complex consisting of tau(3):delta(1):delta'(1). The DNA polymerase III holoenzyme complex contains at least 10 different subunits organized into 3 functionally essential subassemblies: the Pol III core, the beta sliding clamp processivity factor and the clamp-loading complex. The Pol III core (subunits alpha, epsilon and theta) contains the polymerase and the 3'-5' exonuclease proofreading activities. The polymerase is tethered to the template via the dimeric beta sliding clamp processivity factor. The DNA clamp-loading complex assembles the beta sliding clamp onto the primed template and plays a central role in the organization and communication at the replication fork.

Its subcellular location is the cytoplasm. It is found in the nucleoid. The catalysed reaction is DNA(n) + a 2'-deoxyribonucleoside 5'-triphosphate = DNA(n+1) + diphosphate. Part of the beta sliding clamp loading complex, which hydrolyzes ATP to load the beta clamp onto primed DNA to form the DNA replication pre-initiation complex. DNA polymerase III is a complex, multichain enzyme responsible for most of the replicative synthesis in bacteria. This DNA polymerase also exhibits 3'-5' exonuclease activity. The delta subunit is the wrench that will open the beta subunit dimer. The DNA clamp loading complex (tau(3),delta,delta') is thought to load beta dimers onto DNA by binding ATP which alters the complex's conformation so it can bind beta sliding clamp dimers and open them at one interface. Primed DNA is recognized, ATP is hydrolyzed releasing the clamp loading complex and closing the beta sliding clamp ring around the primed DNA. The sequence is that of DNA polymerase III subunit delta from Bacillus subtilis (strain 168).